The primary structure comprises 312 residues: MRIDLSLKPTPVQFLKRLSEKYGFNIYVKRDDLTELVGSGNKIRKLEYLLWEALKKGATTVFTCGGLQSNHARATAYVSRRYGLKPVLFLRKGEKVLNGNLLLDILLGAEIVEVSPEEYERIDEIFDVHKKMREKKGEKVYVIPEGGSNSLGAFGYFNAVLEMKDQLNLESFDAIVCAVGSGGTIAGLSAGISFLEYHVPVVGVNVTTKNSDYFVGKVKRIISGMEEYGLRVNETVFEVVDDYRGPGYAIPSSEDVEILKEVASIEGIILDPVYTAKAFRGMIEMFRNSEKNVLFIHTGGIFGLFAQSRRLV.

Lysine 42 bears the N6-(pyridoxal phosphate)lysine mark.

It belongs to the ACC deaminase/D-cysteine desulfhydrase family. The cofactor is pyridoxal 5'-phosphate.

It catalyses the reaction 1-aminocyclopropane-1-carboxylate + H2O = 2-oxobutanoate + NH4(+). This is Putative 1-aminocyclopropane-1-carboxylate deaminase from Thermotoga maritima (strain ATCC 43589 / DSM 3109 / JCM 10099 / NBRC 100826 / MSB8).